A 125-amino-acid polypeptide reads, in one-letter code: Large ribosomal subunit protein mL51 (125 aa).

The N-terminal 29 residues, 1-29 (MWSVQKLLWGCRSLLPQGCRSFSLGNRDL), are a transit peptide targeting the mitochondrion.

This sequence belongs to the mitochondrion-specific ribosomal protein mL51 family. In terms of assembly, component of the mitochondrial ribosome large subunit (39S) which comprises a 16S rRNA and about 50 distinct proteins.

The protein resides in the mitochondrion. The protein is Large ribosomal subunit protein mL51 (mrpl51) of Xenopus laevis (African clawed frog).